We begin with the raw amino-acid sequence, 161 residues long: Peptidyl-prolyl cis-trans isomerase-like 1 (161 aa).

Residues 1–155 form the PPIase cyclophilin-type domain; it reads MATDVVFDTS…DEVKIIRAKV (155 aa).

The protein belongs to the cyclophilin-type PPIase family. PPIL1 subfamily.

It catalyses the reaction [protein]-peptidylproline (omega=180) = [protein]-peptidylproline (omega=0). Functionally, PPIases accelerate the folding of proteins. It catalyzes the cis-trans isomerization of proline imidic peptide bonds in oligopeptides. The sequence is that of Peptidyl-prolyl cis-trans isomerase-like 1 (cyp1) from Aspergillus fumigatus (strain ATCC MYA-4609 / CBS 101355 / FGSC A1100 / Af293) (Neosartorya fumigata).